The primary structure comprises 350 residues: Biotin synthase (350 aa).

In terms of domain architecture, Radical SAM core spans 41–265 (NEVQISRLLS…VMPLSRVRLS (225 aa)). Residues cysteine 56, cysteine 60, and cysteine 63 each contribute to the [4Fe-4S] cluster site. [2Fe-2S] cluster-binding residues include cysteine 100, cysteine 131, cysteine 191, and arginine 263.

The protein belongs to the radical SAM superfamily. Biotin synthase family. In terms of assembly, homodimer. It depends on [4Fe-4S] cluster as a cofactor. [2Fe-2S] cluster serves as cofactor.

It carries out the reaction (4R,5S)-dethiobiotin + (sulfur carrier)-SH + 2 reduced [2Fe-2S]-[ferredoxin] + 2 S-adenosyl-L-methionine = (sulfur carrier)-H + biotin + 2 5'-deoxyadenosine + 2 L-methionine + 2 oxidized [2Fe-2S]-[ferredoxin]. It participates in cofactor biosynthesis; biotin biosynthesis; biotin from 7,8-diaminononanoate: step 2/2. In terms of biological role, catalyzes the conversion of dethiobiotin (DTB) to biotin by the insertion of a sulfur atom into dethiobiotin via a radical-based mechanism. The sequence is that of Biotin synthase from Shewanella loihica (strain ATCC BAA-1088 / PV-4).